Consider the following 337-residue polypeptide: Regulator of RpoS (337 aa).

Positions Gln-9–Cys-123 constitute a Response regulatory domain. At Asp-58 the chain carries 4-aspartylphosphate.

The protein belongs to the RssB family. Binds to RpoS. Phosphorylated. Phosphorylation stimulates the interaction with RpoS and, therefore, the proteolysis of RpoS.

In terms of biological role, regulates the turnover of the sigma S factor (RpoS) by promoting its proteolysis in exponentially growing cells. Acts by binding and delivering RpoS to the ClpXP protease. RssB is not co-degraded with RpoS, but is released from the complex and can initiate a new cycle of RpoS recognition and degradation. In Shigella flexneri, this protein is Regulator of RpoS.